The primary structure comprises 97 residues: Biogenesis of lysosome-related organelles complex 1 subunit SNN1 (97 aa).

The stretch at Val45–Val97 forms a coiled coil.

It belongs to the SNAPIN family. Component of the biogenesis of lysosome-related organelles complex-1 (BLOC-1).

Its subcellular location is the endosome. Functionally, component of the biogenesis of lysosome-related organelles complex-1 (BLOC-1), a complex involved in endosomal cargo sorting. This Lachancea thermotolerans (strain ATCC 56472 / CBS 6340 / NRRL Y-8284) (Yeast) protein is Biogenesis of lysosome-related organelles complex 1 subunit SNN1 (SNN1).